The primary structure comprises 660 residues: Transcription activator of gluconeogenesis CHGG_09150 (660 aa).

Residues 1–12 (MSDSENEYDETD) are compositionally biased toward acidic residues. The segment at 1–52 (MSDSENEYDETDQLVKEEDEKMSDQRLTSEGADTSAEPKKKYDPKDPLRPRR) is disordered. 2 stretches are compositionally biased toward basic and acidic residues: residues 13–24 (QLVKEEDEKMSD) and 36–49 (AEPKKKYDPKDPLR). A DNA-binding region (zn(2)-C6 fungal-type) is located at residues 59–87 (CFACQRAHLTCGDERPCQRCIKRNLMESC). Disordered regions lie at residues 98-144 (LHDA…TFFS), 170-191 (FANQQSPTSPSFQTSGNPQISG), and 319-368 (PTSI…RQSN). A compositionally biased stretch (polar residues) spans 129-144 (SIQTSEASSNQGTFFS). The span at 173-184 (QQSPTSPSFQTS) shows a compositional bias: low complexity. 2 stretches are compositionally biased toward polar residues: residues 320-332 (TSIQSPSTDTNSP) and 344-368 (TMATFSTTPGSKPANQQRPSTRQSN). Positions 455–526 (SLLEYEEFMH…NSKARVGLAT (72 aa)) constitute a PAS domain. Positions 587–613 (APDKDDGTGESSTDGQLPQKDPRNSIL) are disordered.

Belongs to the ERT1/acuK family.

Its subcellular location is the nucleus. Functionally, transcription factor which regulates nonfermentable carbon utilization. Activator of gluconeogenetic genes. The polypeptide is Transcription activator of gluconeogenesis CHGG_09150 (Chaetomium globosum (strain ATCC 6205 / CBS 148.51 / DSM 1962 / NBRC 6347 / NRRL 1970) (Soil fungus)).